Here is a 276-residue protein sequence, read N- to C-terminus: Bifunctional protein FolD (276 aa).

Residues 158-160 (NRS), S183, and I224 each bind NADP(+).

It belongs to the tetrahydrofolate dehydrogenase/cyclohydrolase family. In terms of assembly, homodimer.

The enzyme catalyses (6R)-5,10-methylene-5,6,7,8-tetrahydrofolate + NADP(+) = (6R)-5,10-methenyltetrahydrofolate + NADPH. The catalysed reaction is (6R)-5,10-methenyltetrahydrofolate + H2O = (6R)-10-formyltetrahydrofolate + H(+). It participates in one-carbon metabolism; tetrahydrofolate interconversion. Functionally, catalyzes the oxidation of 5,10-methylenetetrahydrofolate to 5,10-methenyltetrahydrofolate and then the hydrolysis of 5,10-methenyltetrahydrofolate to 10-formyltetrahydrofolate. In Picrophilus torridus (strain ATCC 700027 / DSM 9790 / JCM 10055 / NBRC 100828 / KAW 2/3), this protein is Bifunctional protein FolD.